Reading from the N-terminus, the 378-residue chain is Erythronate-4-phosphate dehydrogenase (378 aa).

The substrate site is built by Ser-45 and Thr-66. NAD(+) contacts are provided by Asp-146 and Thr-175. Arg-208 is a catalytic residue. Residue Asp-232 coordinates NAD(+). Residue Glu-237 is part of the active site. His-254 serves as the catalytic Proton donor. Gly-257 is an NAD(+) binding site. Tyr-258 lines the substrate pocket.

Belongs to the D-isomer specific 2-hydroxyacid dehydrogenase family. PdxB subfamily. Homodimer.

The protein resides in the cytoplasm. The catalysed reaction is 4-phospho-D-erythronate + NAD(+) = (R)-3-hydroxy-2-oxo-4-phosphooxybutanoate + NADH + H(+). The protein operates within cofactor biosynthesis; pyridoxine 5'-phosphate biosynthesis; pyridoxine 5'-phosphate from D-erythrose 4-phosphate: step 2/5. Catalyzes the oxidation of erythronate-4-phosphate to 3-hydroxy-2-oxo-4-phosphonooxybutanoate. This Escherichia coli O6:H1 (strain CFT073 / ATCC 700928 / UPEC) protein is Erythronate-4-phosphate dehydrogenase.